The chain runs to 211 residues: RILP-like protein 2 (211 aa).

Residues 1–32 are disordered; the sequence is MEEPPVREEEEEEGEEDEERDEVGPEGALGKS. The span at 8 to 21 shows a compositional bias: acidic residues; it reads EEEEEEGEEDEERD. Residues 24-106 form the RH1 domain; the sequence is GPEGALGKSP…RKEVEGLRRQ (83 aa). A coiled-coil region spans residues 70 to 164; sequence RVLEMLEALV…VQEELQCYKS (95 aa). Serine 107 bears the Phosphoserine mark. An RH2 domain is found at 130 to 201; the sequence is RPRFTLQELR…NKEEKTIIKK (72 aa). Residues 166 to 190 are disordered; it reads LIPPREGPGGRREKDAVVTSAKNAG.

Belongs to the RILPL family. Homodimer. Interacts with RAC1. Interacts (via N-terminus) with MYO5A, the interaction is required for its role in dendrite formation. Interacts with RAB8A; interaction is dependent on the phosphorylation of RAB8A on 'Thr-72'. Interacts with RAB10 and RAB12; interaction is dependent on the phosphorylation of 'Thr-73' on RAB10 and 'Ser-105' on RAB12. As to expression, widely expressed. Expressed at higher level in lung.

The protein localises to the cytoplasm. It localises to the cytosol. Its subcellular location is the cytoskeleton. It is found in the microtubule organizing center. The protein resides in the centrosome. The protein localises to the cell projection. It localises to the cilium. Involved in cell shape and neuronal morphogenesis, positively regulating the establishment and maintenance of dendritic spines. Plays a role in cellular protein transport, including protein transport away from primary cilia. May function via activation of RAC1 and PAK1. This Homo sapiens (Human) protein is RILP-like protein 2 (RILPL2).